The following is a 215-amino-acid chain: Probable nicotinate-nucleotide adenylyltransferase (215 aa).

This sequence belongs to the NadD family.

The enzyme catalyses nicotinate beta-D-ribonucleotide + ATP + H(+) = deamido-NAD(+) + diphosphate. It participates in cofactor biosynthesis; NAD(+) biosynthesis; deamido-NAD(+) from nicotinate D-ribonucleotide: step 1/1. Catalyzes the reversible adenylation of nicotinate mononucleotide (NaMN) to nicotinic acid adenine dinucleotide (NaAD). In Coxiella burnetii (strain RSA 331 / Henzerling II), this protein is Probable nicotinate-nucleotide adenylyltransferase.